A 1084-amino-acid polypeptide reads, in one-letter code: Ribonucleoside-diphosphate reductase NrdEB subunit alpha (1084 aa).

Substrate contacts are provided by residues T152, 168–169, and G197; that span reads SC. C169 and C793 are oxidised to a cystine. N379 serves as the catalytic Proton acceptor. C381 acts as the Cysteine radical intermediate in catalysis. In terms of domain architecture, DOD-type homing endonuclease spans 503–654; that stretch reads IMGIIAGDGT…VQKLLLNMGV (152 aa). E768 functions as the Proton acceptor in the catalytic mechanism. A substrate-binding site is contributed by 964–968; it reads PTGSI.

The protein belongs to the ribonucleoside diphosphate reductase large chain family. In terms of assembly, tetramer of two alpha and two beta subunits. This protein undergoes protein self-splicing that involves post-translational excision of the intervening region (intein) followed by peptide ligation.

The enzyme catalyses a 2'-deoxyribonucleoside 5'-diphosphate + [thioredoxin]-disulfide + H2O = a ribonucleoside 5'-diphosphate + [thioredoxin]-dithiol. With respect to regulation, under complex allosteric control mediated by deoxynucleoside triphosphates and ATP binding. The type of nucleotide bound at the specificity site determines substrate preference. It seems probable that ATP makes the enzyme reduce CDP and UDP, dGTP favors ADP reduction and dTTP favors GDP reduction. Provides the precursors necessary for DNA synthesis. Catalyzes the biosynthesis of deoxyribonucleotides from the corresponding ribonucleotides. The chain is Ribonucleoside-diphosphate reductase NrdEB subunit alpha (nrdEB) from Bacillus subtilis (strain 168).